The following is a 623-amino-acid chain: Kelch repeat and BTB domain-containing protein 2 (623 aa).

Residues threonine 31–aspartate 98 enclose the BTB domain. The BACK domain maps to cysteine 133–threonine 229. The residue at position 300 (serine 300) is a Phosphoserine. 5 Kelch repeats span residues aspartate 317 to glycine 380, tyrosine 381 to aspartate 429, isoleucine 431 to aspartate 469, lysine 470 to valine 529, and cysteine 535 to cysteine 581.

In terms of assembly, component of the BCR(KBTBD2) E3 ubiquitin ligase complex, at least composed of CUL3, KBTBD2 and RBX1. Interacts (via the BTB domain) with CUL3.

The protein operates within protein modification; protein ubiquitination. Its function is as follows. Substrate-specific adapter of a BCR (BTB-CUL3-RBX1) E3 ubiquitin ligase complex that acts as a regulator of the insulin signaling pathway, modulating insulin sensitivity by limiting PIK3R1/p85alpha abundance in adipocytes. Targets PIK3R1, the regulatory subunit of phosphatidylinositol 3-kinase (PI3K), for 'Lys-48'-linked polyubiquitination and proteasome-mediated degradation. This is Kelch repeat and BTB domain-containing protein 2 from Homo sapiens (Human).